We begin with the raw amino-acid sequence, 318 residues long: 4-diphosphocytidyl-2-C-methyl-D-erythritol kinase (318 aa).

Lys13 is an active-site residue. 101-111 (PVAGGMAGGSA) contributes to the ATP binding site. Asp143 is a catalytic residue. The segment at 298–318 (PGARLVTDDRADRPTPPQVHA) is disordered.

The protein belongs to the GHMP kinase family. IspE subfamily.

It catalyses the reaction 4-CDP-2-C-methyl-D-erythritol + ATP = 4-CDP-2-C-methyl-D-erythritol 2-phosphate + ADP + H(+). It participates in isoprenoid biosynthesis; isopentenyl diphosphate biosynthesis via DXP pathway; isopentenyl diphosphate from 1-deoxy-D-xylulose 5-phosphate: step 3/6. In terms of biological role, catalyzes the phosphorylation of the position 2 hydroxy group of 4-diphosphocytidyl-2C-methyl-D-erythritol. This chain is 4-diphosphocytidyl-2-C-methyl-D-erythritol kinase, found in Saccharopolyspora erythraea (strain ATCC 11635 / DSM 40517 / JCM 4748 / NBRC 13426 / NCIMB 8594 / NRRL 2338).